Here is a 191-residue protein sequence, read N- to C-terminus: Calcium-activated potassium channel subunit beta-1 (191 aa).

Topologically, residues Met-1–Cys-18 are cytoplasmic. A helical transmembrane segment spans residues Leu-19–Leu-39. At Pro-40–Leu-157 the chain is on the extracellular side. N-linked (GlcNAc...) asparagine glycans are attached at residues Asn-80 and Asn-142. Residues Leu-158–Val-178 form a helical membrane-spanning segment. Topologically, residues Lys-179–Lys-191 are cytoplasmic.

Belongs to the KCNMB (TC 8.A.14.1) family. KCNMB1 subfamily. Interacts with KCNMA1 tetramer. There are probably 4 molecules of KCMNB1 per KCNMA1 tetramer. N-glycosylated. As to expression, abundantly expressed in smooth muscle. Low levels of expression in most other tissues. Within the brain, relatively high levels found in hippocampus and corpus callosum.

It localises to the membrane. Its function is as follows. Regulatory subunit of the calcium activated potassium KCNMA1 (maxiK) channel. Modulates the calcium sensitivity and gating kinetics of KCNMA1, thereby contributing to KCNMA1 channel diversity. Increases the apparent Ca(2+)/voltage sensitivity of the KCNMA1 channel. It also modifies KCNMA1 channel kinetics and alters its pharmacological properties. It slows down the activation and the deactivation kinetics of the channel. Acts as a negative regulator of smooth muscle contraction by enhancing the calcium sensitivity to KCNMA1. Its presence is also a requirement for internal binding of the KCNMA1 channel opener dehydrosoyasaponin I (DHS-1) triterpene glycoside and for external binding of the agonist hormone 17-beta-estradiol (E2). Increases the binding activity of charybdotoxin (CTX) toxin to KCNMA1 peptide blocker by increasing the CTX association rate and decreasing the dissociation rate. The chain is Calcium-activated potassium channel subunit beta-1 (KCNMB1) from Homo sapiens (Human).